A 431-amino-acid chain; its full sequence is uncharacterized protein (431 aa).

Disordered regions lie at residues 1–37 and 102–132; these read MFWR…KLTP and PPPL…RRVA. A compositionally biased stretch (basic and acidic residues) spans 22–32; that stretch reads GDFRRSSDPRL. The segment covering 106–121 has biased composition (low complexity); sequence LSAGASRESAPRQPGP. Residues 122-132 are compositionally biased toward basic and acidic residues; sequence GERERPRRRVA.

It localises to the cytoplasm. This is an uncharacterized protein from Homo sapiens (Human).